Reading from the N-terminus, the 337-residue chain is MVDYVTDIVVIGAGPIGIFTVFQSGMLSMQCCVIDSLNEIGGQCVALYPEKPIYDIPAYPIITAKELINNLVEQSKPFDPQYLLGQVAEKIEEYIDYLLVKTNYGTVIQCKAIIIAAGSGAFGPNRLPVDNIIDFENKSVFYSVKQISDFYDKSVMIAGGGDSAADWAVELSKVTKQLYMVHRRKNFRCSPNTSLKLDDLFQRGKINLVVPYQIKQLCGKDGKLDYVVVKNITTSEELTLQVDYLLPFFGTSANLGPILNWGITISGYQIVIDPATCRTNRNRIYAVGDVSTYPGKIKLILTGFSESAMACHDIYHIVYPNSPLNFQYSTSKGIPKV.

The FAD site is built by Asp-35, Gln-43, Tyr-48, Ala-88, Phe-122, Asp-289, and Thr-330.

Belongs to the ferredoxin--NADP reductase type 2 family. As to quaternary structure, homodimer. The cofactor is FAD.

It carries out the reaction 2 reduced [2Fe-2S]-[ferredoxin] + NADP(+) + H(+) = 2 oxidized [2Fe-2S]-[ferredoxin] + NADPH. The chain is Ferredoxin--NADP reductase from Ehrlichia ruminantium (strain Welgevonden).